The sequence spans 793 residues: Methionine--tRNA ligase (793 aa).

Residues 11-21 (PYVNNFPHLGN) carry the 'HIGH' region motif. 4 residues coordinate Zn(2+): cysteine 142, cysteine 145, cysteine 155, and cysteine 158. Residues 334 to 338 (KFSKS) carry the 'KMSKS' region motif. Lysine 337 is a binding site for ATP. The segment covering 581-590 (SQKDRKKSEK) has biased composition (basic and acidic residues). Residues 581–610 (SQKDRKKSEKGCSACKDSGSSKSDAAASSA) form a disordered region. A compositionally biased stretch (low complexity) spans 591-610 (GCSACKDSGSSKSDAAASSA). Residues 622-727 (FSKKIALKTA…PWAAPGTPVI (106 aa)) form the tRNA-binding domain.

The protein belongs to the class-I aminoacyl-tRNA synthetase family. MetG type 1 subfamily. Homodimer. The cofactor is Zn(2+).

It is found in the cytoplasm. The enzyme catalyses tRNA(Met) + L-methionine + ATP = L-methionyl-tRNA(Met) + AMP + diphosphate. Functionally, is required not only for elongation of protein synthesis but also for the initiation of all mRNA translation through initiator tRNA(fMet) aminoacylation. In Treponema denticola (strain ATCC 35405 / DSM 14222 / CIP 103919 / JCM 8153 / KCTC 15104), this protein is Methionine--tRNA ligase.